We begin with the raw amino-acid sequence, 358 residues long: Protein SGT1 homolog B (358 aa).

TPR repeat units lie at residues 2 to 35 (AKELAEKAKEAFLDDDFDVAVDLYSKAIDLDPNC), 37 to 69 (AFFADRAQANIKIDNFTEAVVDANKAIELEPTL), and 70 to 103 (AKAYLRKGTACMKLEEYSTAKAALEKGASVAPNE). The region spanning 157–246 (KPMFRHEFYQ…AEIITWASLE (90 aa)) is the CS domain. A disordered region spans residues 255–275 (PKPNVSSALSQRPVYPSSKPA). One can recognise an SGS domain in the interval 268–358 (VYPSSKPAKD…DGMELKKWEY (91 aa)).

This sequence belongs to the SGT1 family. As to quaternary structure, interacts with RAR1 and HSP90-2. Interacts (via SGS domain) with HSC70-1 and HSC70-3.

It localises to the cytoplasm. The protein localises to the nucleus. Involved in plant innate immunity. Essential for race-specific resistance conferred by multiple R genes, including RPP7, recognizing different oomycete pathogen isolates like avirulent Hyaloperonospora arabidopsidis (downy mildew). Contributes additively with RAR1 to RPP5-dependent resistance. Not required for RPM1, RPS2, RPS4 and RPS5-mediated resistance. Functions as a negative regulator of RPS5 accumulation by assisting its degradation. May be involved in heat shock response by associating with HSC70-1 chaperone. Required for the SCF(TIR1)-mediated degradation of Aux/IAA proteins, but maybe not for SCF(TIR1) assembly or binding to its Aux/IAA substrates. Probably required for SCF-mediated ubiquitination, by coupling HSP90 to SCF complex for ubiquitination of HSP90 client proteins. Required for the coronatine/jasmonic acid-mediated signal transduction pathway. This is Protein SGT1 homolog B from Arabidopsis thaliana (Mouse-ear cress).